A 378-amino-acid chain; its full sequence is Ribosomal RNA large subunit methyltransferase G (378 aa).

Belongs to the methyltransferase superfamily. RlmG family.

It is found in the cytoplasm. The catalysed reaction is guanosine(1835) in 23S rRNA + S-adenosyl-L-methionine = N(2)-methylguanosine(1835) in 23S rRNA + S-adenosyl-L-homocysteine + H(+). Specifically methylates the guanine in position 1835 (m2G1835) of 23S rRNA. This chain is Ribosomal RNA large subunit methyltransferase G, found in Escherichia coli O157:H7.